Here is a 118-residue protein sequence, read N- to C-terminus: Basic phospholipase A2 2 (118 aa).

7 disulfide bridges follow: C11–C71, C27–C117, C29–C45, C44–C98, C51–C91, C60–C84, and C78–C89. Positions 28, 30, and 32 each coordinate Ca(2+). Residue H48 is part of the active site. D49 contributes to the Ca(2+) binding site. D92 is an active-site residue.

This sequence belongs to the phospholipase A2 family. Group I subfamily. D49 sub-subfamily. It depends on Ca(2+) as a cofactor. As to expression, expressed by the venom gland.

Its subcellular location is the secreted. It carries out the reaction a 1,2-diacyl-sn-glycero-3-phosphocholine + H2O = a 1-acyl-sn-glycero-3-phosphocholine + a fatty acid + H(+). Functionally, snake venom phospholipase A2 (PLA2) that inhibits neuromuscular transmission by blocking acetylcholine release from the nerve termini. PLA2 catalyzes the calcium-dependent hydrolysis of the 2-acyl groups in 3-sn-phosphoglycerides. In Laticauda colubrina (Yellow-lipped sea krait), this protein is Basic phospholipase A2 2.